A 142-amino-acid chain; its full sequence is D-aminoacyl-tRNA deacylase (142 aa).

Residues 133–134 carry the Gly-cisPro motif, important for rejection of L-amino acids motif; sequence GP.

Belongs to the DTD family. As to quaternary structure, homodimer.

The protein localises to the cytoplasm. The catalysed reaction is glycyl-tRNA(Ala) + H2O = tRNA(Ala) + glycine + H(+). It catalyses the reaction a D-aminoacyl-tRNA + H2O = a tRNA + a D-alpha-amino acid + H(+). In terms of biological role, an aminoacyl-tRNA editing enzyme that deacylates mischarged D-aminoacyl-tRNAs. Also deacylates mischarged glycyl-tRNA(Ala), protecting cells against glycine mischarging by AlaRS. Acts via tRNA-based rather than protein-based catalysis; rejects L-amino acids rather than detecting D-amino acids in the active site. By recycling D-aminoacyl-tRNA to D-amino acids and free tRNA molecules, this enzyme counteracts the toxicity associated with the formation of D-aminoacyl-tRNA entities in vivo and helps enforce protein L-homochirality. The protein is D-aminoacyl-tRNA deacylase of Acidothermus cellulolyticus (strain ATCC 43068 / DSM 8971 / 11B).